The chain runs to 288 residues: Acetyl-coenzyme A carboxylase carboxyl transferase subunit beta (288 aa).

Residues 34-288 form the CoA carboxyltransferase N-terminal domain; that stretch reads LWVKCSRCNE…ANILSLHGTN (255 aa). Positions 38, 41, 57, and 60 each coordinate Zn(2+). A C4-type zinc finger spans residues 38–60; it reads CSRCNEILYTKELDKNFKVCHKC.

It belongs to the AccD/PCCB family. As to quaternary structure, acetyl-CoA carboxylase is a heterohexamer composed of biotin carboxyl carrier protein (AccB), biotin carboxylase (AccC) and two subunits each of ACCase subunit alpha (AccA) and ACCase subunit beta (AccD). It depends on Zn(2+) as a cofactor.

Its subcellular location is the cytoplasm. It catalyses the reaction N(6)-carboxybiotinyl-L-lysyl-[protein] + acetyl-CoA = N(6)-biotinyl-L-lysyl-[protein] + malonyl-CoA. It functions in the pathway lipid metabolism; malonyl-CoA biosynthesis; malonyl-CoA from acetyl-CoA: step 1/1. Functionally, component of the acetyl coenzyme A carboxylase (ACC) complex. Biotin carboxylase (BC) catalyzes the carboxylation of biotin on its carrier protein (BCCP) and then the CO(2) group is transferred by the transcarboxylase to acetyl-CoA to form malonyl-CoA. The chain is Acetyl-coenzyme A carboxylase carboxyl transferase subunit beta from Desulforamulus reducens (strain ATCC BAA-1160 / DSM 100696 / MI-1) (Desulfotomaculum reducens).